A 447-amino-acid chain; its full sequence is Serine/threonine-protein kinase NLK2 (447 aa).

The region spanning 60–349 is the Protein kinase domain; sequence PEPDRPIGYG…AKDALAHPYL (290 aa). ATP-binding positions include 66-74 and Lys89; that span reads IGYGAFGVV. Asp186 (proton acceptor) is an active-site residue.

This sequence belongs to the protein kinase superfamily. CMGC Ser/Thr protein kinase family. MAP kinase subfamily. In terms of assembly, interacts with sox11, hmgxb4/hmg2l1, rnf138/narf, stat3.1 and mef2a. It depends on Mg(2+) as a cofactor. Expressed widely in the ectoderm during early gastrula stage when neural induction is taking place. Expressed in the head region of neurula stage embryos. At the end of neurulation, expression becomes localized to the nervous system, and is restricted to the central nervous system, eye and head neural crest cells by the early tadpole stages.

The protein localises to the nucleus. It is found in the cytoplasm. The catalysed reaction is L-seryl-[protein] + ATP = O-phospho-L-seryl-[protein] + ADP + H(+). It carries out the reaction L-threonyl-[protein] + ATP = O-phospho-L-threonyl-[protein] + ADP + H(+). Activated by tyrosine and threonine phosphorylation. Functionally, negatively regulates Wnt/beta-catenin-signaling during development. Plays a role together with sox11 in neural induction during early embryogenesis. Involved in TGFbeta-mediated mesoderm induction in early embryos, acting downstream of map3k7/tak1 to phosphorylate stat3.1. Augments the rnf138/narf-directed ubiquitination and degradation of tcf/lef by enhancing the association of rnf138/narf and tcf/lef. Phosphorylates mef2a to play a role in anterior neural development, including eye formation. This Xenopus laevis (African clawed frog) protein is Serine/threonine-protein kinase NLK2 (nlk.2).